The sequence spans 317 residues: 2-oxoglutarate and iron-dependent oxygenase domain-containing protein 3 (317 aa).

Residues 1–34 are disordered; the sequence is MATRHRRRGGSAPSWAKPGKPGERPGGPKKSRGR. Over 1-39 the chain is Cytoplasmic; it reads MATRHRRRGGSAPSWAKPGKPGERPGGPKKSRGRTSWKS. A helical; Signal-anchor for type II membrane protein membrane pass occupies residues 40-60; it reads LLIWGVFGVTLGLMAGYYLWG. Residues 61–317 are Lumenal-facing; sequence ELITDDSVTE…EHAIGDPTWT (257 aa). N-linked (GlcNAc...) asparagine glycans are attached at residues asparagine 195 and asparagine 213. Residues 205–307 form the Fe2OG dioxygenase domain; sequence KPTFFSRMNS…AITISFTCNP (103 aa). The Fe cation site is built by histidine 228 and aspartate 230. The N-linked (GlcNAc...) asparagine glycan is linked to asparagine 265. Histidine 286 contacts Fe cation. Residue arginine 296 is part of the active site. Arginine 296 serves as a coordination point for 2-oxoglutarate.

Belongs to the OGFOD3 family. The cofactor is Fe(2+). It depends on L-ascorbate as a cofactor.

The protein resides in the membrane. The chain is 2-oxoglutarate and iron-dependent oxygenase domain-containing protein 3 (ogfod3) from Xenopus tropicalis (Western clawed frog).